A 222-amino-acid polypeptide reads, in one-letter code: MIFVENKEIVLPGSLLTDNNYKLGRGTYKENGKIYSSITGLVYFESEQIKVIPLKDTYSPNYGDLVIGRVTGSSYSSWSIDINSTYHGFLPTTELYDKNEPNINNIINIKDMLLLRVANVDEINRVKLTLRSRGLGKFNQGTIIKVKQPTIHFLSEENAFLTTMIQEYTYTDVIIGKNGLIWINGLKENIERIIEIIELIEKEEPLKHNLIKHIQSMILNPK.

Positions 63–131 (GDLVIGRVTG…EINRVKLTLR (69 aa)) constitute an S1 motif domain.

Belongs to the RRP4 family. In terms of assembly, component of the archaeal exosome complex. Forms a trimer of Rrp4 and/or Csl4 subunits. The trimer associates with a hexameric ring-like arrangement composed of 3 Rrp41-Rrp42 heterodimers.

It is found in the cytoplasm. Its function is as follows. Non-catalytic component of the exosome, which is a complex involved in RNA degradation. Increases the RNA binding and the efficiency of RNA degradation. Confers strong poly(A) specificity to the exosome. The polypeptide is Exosome complex component Rrp4 (Methanosphaera stadtmanae (strain ATCC 43021 / DSM 3091 / JCM 11832 / MCB-3)).